The sequence spans 177 residues: RNA silencing suppressor (177 aa).

In terms of assembly, homooctamer. The eight monomers assemble into a closed ring that binds RNA.

It is found in the host cytoplasm. In terms of biological role, acts as a suppressor of RNA-mediated gene silencing, also known as post-transcriptional gene silencing (PTGS), a mechanism of plant viral defense that limits the accumulation of viral RNAs. Binds to ssRNAs and dsRNAs in vitro. Also functions as a replication enhancer. The polypeptide is RNA silencing suppressor (Beta vulgaris (Sugar beet)).